Here is a 130-residue protein sequence, read N- to C-terminus: Ribosome-binding factor A (130 aa).

The protein belongs to the RbfA family. Monomer. Binds 30S ribosomal subunits, but not 50S ribosomal subunits or 70S ribosomes.

The protein resides in the cytoplasm. Its function is as follows. One of several proteins that assist in the late maturation steps of the functional core of the 30S ribosomal subunit. Associates with free 30S ribosomal subunits (but not with 30S subunits that are part of 70S ribosomes or polysomes). Required for efficient processing of 16S rRNA. May interact with the 5'-terminal helix region of 16S rRNA. The polypeptide is Ribosome-binding factor A (Prochlorococcus marinus (strain MIT 9215)).